The following is a 322-amino-acid chain: uncharacterized protein (322 aa).

Polar residues predominate over residues 1–13 (MTNADEQNMGQQE). Disordered regions lie at residues 1 to 94 (MTNA…EEYE) and 125 to 322 (RREM…TDEE). The segment covering 14-31 (GTDTATTAQDTNTQTVGT) has biased composition (low complexity). Residues 32–50 (QSENTQNTQQASDAQTEQT) show a composition bias toward polar residues. The span at 64 to 75 (EVDEDDVLDAQE) shows a compositional bias: acidic residues. 4 stretches are compositionally biased toward basic and acidic residues: residues 141–227 (GGDR…RGGD), 235–269 (RPRE…RGGD), 277–295 (RPRE…RTDD), and 308–322 (ARAD…TDEE).

This is an uncharacterized protein from Deinococcus radiodurans (strain ATCC 13939 / DSM 20539 / JCM 16871 / CCUG 27074 / LMG 4051 / NBRC 15346 / NCIMB 9279 / VKM B-1422 / R1).